The sequence spans 446 residues: MEKYLSVTTLTKYLKMKFDKDPYLERVYLTGQVSNFRKRPTHQYFSLKDDHAVIQATIWSGIYQKLGFDLEEGMKINVIGRVQVYEPSGNYSIIIEKAEPDGVGALAIQFEQLKKKLTEEGLFQERFKQALPQFSKRIGVVTSRSGAVIRDIITTVSRRFPGVDILLYPTKVQGEGAAEEIARNIARANQRDDLDLLIIGRGGGSIEDLWAFNEEIVVRAIFESRLPVISSVGHETDVTLADFVADRRAATPTAAAELATPVTKLDVLAHLQNQEKRMVTAVRNVLSKKQEALKKCSQSVIFRQPERLYDGYLQRLDQLQLRLKQSLRTRISDNKQLVQARTHQLVQLSPVTKIQRYQDRLGQLDKLLGSQMALVYDAKVAEAKRLSEALLMLDTSRIVARGYAIVKKEESVVDSVESLKKKDQVTLLMRDGQVELEVKDVKTKEI.

It belongs to the XseA family. Heterooligomer composed of large and small subunits.

It is found in the cytoplasm. It catalyses the reaction Exonucleolytic cleavage in either 5'- to 3'- or 3'- to 5'-direction to yield nucleoside 5'-phosphates.. Its function is as follows. Bidirectionally degrades single-stranded DNA into large acid-insoluble oligonucleotides, which are then degraded further into small acid-soluble oligonucleotides. The polypeptide is Exodeoxyribonuclease 7 large subunit (Streptococcus pneumoniae (strain Taiwan19F-14)).